Reading from the N-terminus, the 108-residue chain is Cell wall protein PGA48 (108 aa).

A signal peptide spans 1 to 17 (MFKFVIYLFTFIAFANA). Residues asparagine 18, asparagine 41, and asparagine 77 are each glycosylated (N-linked (GlcNAc...) asparagine). The GPI-anchor amidated asparagine moiety is linked to residue asparagine 84. A propeptide spans 85-108 (GASKLNLRSLAGAGLVAAIFIAFI) (removed in mature form).

This sequence belongs to the SED1 family. In terms of processing, the GPI-anchor is attached to the protein in the endoplasmic reticulum and serves to target the protein to the cell surface. There, the glucosamine-inositol phospholipid moiety is cleaved off and the GPI-modified mannoprotein is covalently attached via its lipidless GPI glycan remnant to the 1,6-beta-glucan of the outer cell wall layer.

It localises to the secreted. The protein localises to the cell wall. It is found in the membrane. Cell wall protein that plays a role in adaptation and resistance to cell wall stress. This chain is Cell wall protein PGA48 (PGA48), found in Candida albicans (strain SC5314 / ATCC MYA-2876) (Yeast).